Consider the following 144-residue polypeptide: Probable disulfide formation protein (144 aa).

The chain crosses the membrane as a helical span at residues 10–29 (WNLLLLTWLVALISTLSALF). The cysteines at positions 39 and 42 are disulfide-linked. Transmembrane regions (helical) follow at residues 44–63 (FQRA…CYRS) and 70–87 (YALP…VHTL). An intrachain disulfide couples C100 to C107. Residues 116-138 (GVVPLPALALFAFIIIAILLIII) form a helical membrane-spanning segment.

Belongs to the DsbB family. BdbC subfamily.

Its subcellular location is the cell inner membrane. Its function is as follows. Required for disulfide bond formation in some proteins. This Metapseudomonas resinovorans (Pseudomonas resinovorans) protein is Probable disulfide formation protein.